The following is a 27-amino-acid chain: Defensin-like protein 2 (27 aa).

Glutamine 1 carries the post-translational modification Pyrrolidone carboxylic acid.

This sequence belongs to the DEFL family. Forms oligomers in its native state.

In terms of biological role, possesses some antifungal activity sensitive to inorganic cations and antibacterial activity against B.megaterium. This chain is Defensin-like protein 2, found in Brassica campestris (Field mustard).